The chain runs to 2177 residues: Mediator of RNA polymerase II transcription subunit 12 (2177 aa).

Residues 12 to 35 are disordered; the sequence is RPLKRPRLGPPDVYPQDPKQKEDE. Lys-80 bears the N6-acetyllysine mark. The residue at position 166 (Tyr-166) is a Phosphotyrosine. Disordered regions lie at residues 323–344, 627–669, 690–717, and 1241–1266; these read QSTS…TPST, GAPG…MDID, TMPC…PKEK, and TVTG…QGGR. Residues Ser-635, Ser-665, Ser-698, and Ser-700 each carry the phosphoserine modification. The span at 702–717 shows a compositional bias: basic and acidic residues; the sequence is EKPDVEKEVKPPPKEK. Residues Ser-1258 and Ser-1269 each carry the phosphoserine modification. The span at 1394–1411 shows a compositional bias: low complexity; it reads AETGSSSGSTASNMPSSS. Disordered stretches follow at residues 1394-1415, 1450-1474, and 1738-1829; these read AETG…KTKP, ELEK…KSMS, and YLEP…PGSI. 2 stretches are compositionally biased toward basic and acidic residues: residues 1450–1469 and 1758–1771; these read ELEK…DRQK and EPEK…KTDK. The interaction with CTNNB1 and GLI3 stretch occupies residues 1616-2051; sequence LAKKLQKELG…VRSTAILPEQ (436 aa). The span at 1784 to 1793 shows a compositional bias: basic residues; that stretch reads KKSTKGKKRS. The residue at position 1798 (Lys-1798) is an N6-acetyllysine. Asymmetric dimethylarginine; alternate is present on Arg-1899. The residue at position 1899 (Arg-1899) is an Omega-N-methylarginine; alternate. The residue at position 1910 (Arg-1910) is an Omega-N-methylarginine. Disordered stretches follow at residues 1919–1938 and 1967–1989; these read QGML…SYGL and SYSS…DPTR. Residues 1927–1938 are compositionally biased toward polar residues; it reads VHQMTPSSSYGL. Over residues 1967 to 1980 the composition is skewed to low complexity; the sequence is SYSSQPYQSTHPST. An asymmetric dimethylarginine mark is found at Arg-1994 and Arg-2015. Composition is skewed to low complexity over residues 2115–2125, 2133–2149, and 2158–2171; these read QHQQQQQQQAA, SQPQ…QQQQ, and LQQQ…QPST. Disordered stretches follow at residues 2115 to 2149 and 2158 to 2177; these read QHQQ…QQQQ and LQQQ…FGRY.

The protein belongs to the Mediator complex subunit 12 family. In terms of assembly, component of the Mediator complex, which is composed of MED1, MED4, MED6, MED7, MED8, MED9, MED10, MED11, MED12, MED13, MED13L, MED14, MED15, MED16, MED17, MED18, MED19, MED20, MED21, MED22, MED23, MED24, MED25, MED26, MED27, MED29, MED30, MED31, CCNC, CDK8 and CDC2L6/CDK11. The MED12, MED13, CCNC and CDK8 subunits form a distinct module termed the CDK8 module. Mediator containing the CDK8 module is less active than Mediator lacking this module in supporting transcriptional activation. Individual preparations of the Mediator complex lacking one or more distinct subunits have been variously termed ARC, CRSP, DRIP, PC2, SMCC and TRAP. Also interacts with CTNNB1 and GLI3. As to expression, ubiquitous.

Its subcellular location is the nucleus. In terms of biological role, component of the Mediator complex, a coactivator involved in the regulated transcription of nearly all RNA polymerase II-dependent genes. Mediator functions as a bridge to convey information from gene-specific regulatory proteins to the basal RNA polymerase II transcription machinery. Mediator is recruited to promoters by direct interactions with regulatory proteins and serves as a scaffold for the assembly of a functional pre-initiation complex with RNA polymerase II and the general transcription factors. This subunit may specifically regulate transcription of targets of the Wnt signaling pathway and SHH signaling pathway. In Homo sapiens (Human), this protein is Mediator of RNA polymerase II transcription subunit 12 (MED12).